Here is a 37-residue protein sequence, read N- to C-terminus: Large ribosomal subunit protein bL36c (37 aa).

This sequence belongs to the bacterial ribosomal protein bL36 family.

Its subcellular location is the plastid. The protein resides in the chloroplast. The chain is Large ribosomal subunit protein bL36c from Piper cenocladum (Ant piper).